The following is a 101-amino-acid chain: Small ribosomal subunit protein uS14 (101 aa).

The span at 1-10 (MAKKSSVEKN) shows a compositional bias: basic and acidic residues. Positions 1–23 (MAKKSSVEKNNRRKRMAKNAAPK) are disordered. Over residues 11-23 (NRRKRMAKNAAPK) the composition is skewed to basic residues.

This sequence belongs to the universal ribosomal protein uS14 family. As to quaternary structure, part of the 30S ribosomal subunit. Contacts proteins S3 and S10.

Its function is as follows. Binds 16S rRNA, required for the assembly of 30S particles and may also be responsible for determining the conformation of the 16S rRNA at the A site. The polypeptide is Small ribosomal subunit protein uS14 (Bradyrhizobium sp. (strain BTAi1 / ATCC BAA-1182)).